The following is a 1030-amino-acid chain: MMAVASPPPEPEDLLIVKLEEDSWGSDSRPEKESHSPVPGPEVSRRCFRQFRYRDAAGPHEAFSQLWALCCRWLRPELRLKEQILELLVLEQFLSILPREVQTWVQARHPESGEEAVALVEDWHREAWAAGQQGLELCSEDSRSFEAVQEFQRFQLQPVTHGSEGQPRKQWVENARPDLSKMPPESLKESAVLTPQAPTVPKMASIGDWEVAGKSQETPSPSRQAKKEPCQDPAGGDRGDSACLGVPASKPSATSQQEQGPEIWGLSLINSGNGSAADDSLDSAQDKPVQAVAQADSRAWGEPCQWGAEDMKVSGVHWGYEETKTFLAILSESPFSEKLQTCHQNRQVYRAIAERLRARGFLRTLEQCRYRVKNLLRNYRKAKNSHPPGTCPFYEELEALVRARTAIRRTSGGPGEAVALPRLGDSDTEMDDQDEGSWEPEETVEDCSGSGLAAEESLQGPRIAGGPALLQSRIAGVHWGFEETKVFLAILSESPFAEKLRTCHQNSQIYRAIAERLRALGFLRTLEQCRYRFKNLLRSYRKAKSSCPPGTCPFYEEMDSLMRARTVIRAVEMVGEATGLPGSGQSSTEADDQEAWGEMEDEDAVRLLTPDSQPADAGFELKREEEDQISEQDVLGDLPGALSRYTTKAVCQPCDWGEDHVNGNEGEWRNTWEECSSEEDLEKLIDHQGLYLTEKPYGCDTRAKSFSRKVHFFAPQRTHSSEKPYKCLGSGKSFSDRANLSTHQRIHIGEKPYRCLECGKSFNDPSNLITHQRTHTGEKPYKCGLCWKSFNQSSNLLKHQRVHLGGPPNQRDEPGENFGQSLSYSAHWRRNSTQEGPKEPQNISMGADSPGACHPNSGEKLYSCPECGRCFSKSSALTSHQRIHSGEKPYECAVCGKSFSKSSSLANHRRTHTGEKPHKCADCGKCFSERSKLITHQRVHTGEKPYECPECGKFFRDRSNLITHQRIHTGEKPYKCRECGKCFNQSSSLIIHQRIHTGEKPYKCTECGKDFNNSSHFSAHRRTHAGGKAL.

A disordered region spans residues 22-42 (DSWGSDSRPEKESHSPVPGPE). One can recognise an SCAN box domain in the interval 45 to 127 (RRCFRQFRYR…ALVEDWHREA (83 aa)). Disordered regions lie at residues 178–201 (DLSKMPPESLKESAVLTPQAPTVP), 213–285 (GKSQ…DSAQ), 411–441 (SGGPGEAVALPRLGDSDTEMDDQDEGSWEPE), and 578–600 (TGLPGSGQSSTEADDQEAWGEME). Residues 225–240 (AKKEPCQDPAGGDRGD) are compositionally biased toward basic and acidic residues. Composition is skewed to acidic residues over residues 426 to 441 (SDTEMDDQDEGSWEPE) and 589 to 600 (EADDQEAWGEME). The segment at 697 to 719 (YGCDTRAKSFSRKVHFFAPQRTH) adopts a C2H2-type 1; degenerate zinc-finger fold. The C2H2-type 2; degenerate zinc finger occupies 725–747 (YKCLGSGKSFSDRANLSTHQRIH). 2 consecutive C2H2-type zinc fingers follow at residues 753-775 (YRCLECGKSFNDPSNLITHQRTH) and 781-803 (YKCGLCWKSFNQSSNLLKHQRVH). 2 disordered regions span residues 801–820 (RVHLGGPPNQRDEPGENFGQ) and 828–850 (WRRNSTQEGPKEPQNISMGADSP). 6 consecutive C2H2-type zinc fingers follow at residues 862-884 (YSCPECGRCFSKSSALTSHQRIH), 890-912 (YECAVCGKSFSKSSSLANHRRTH), 918-940 (HKCADCGKCFSERSKLITHQRVH), 946-968 (YECPECGKFFRDRSNLITHQRIH), 974-996 (YKCRECGKCFNQSSSLIIHQRIH), and 1002-1024 (YKCTECGKDFNNSSHFSAHRRTH).

It belongs to the krueppel C2H2-type zinc-finger protein family.

The protein resides in the nucleus. Functionally, may be involved in transcriptional regulation. In Mus musculus (Mouse), this protein is Zinc finger and SCAN domain-containing protein 20 (Zscan20).